The following is a 1184-amino-acid chain: Cartilage intermediate layer protein 1 (1184 aa).

Residues 1 to 21 form the signal peptide; that stretch reads MVGTKAWVFSFLVLEVTSVLG. N129 and N132 each carry an N-linked (GlcNAc...) asparagine glycan. The 53-residue stretch at 149–201 folds into the TSP type-1 domain; it reads ERIWSPWSPWSKCSAACGQTGVQTRTRICLAEMVSLCSEASEEGQHCMGQDCT. 4 disulfide bridges follow: C161–C195, C165–C200, C177–C185, and C330–C376. One can recognise an Ig-like C2-type domain in the interval 309-395; sequence PYMVMNPETK…KSKVAQLIVI (87 aa). N346, N420, N550, N631, N1000, and N1056 each carry an N-linked (GlcNAc...) asparagine glycan. Residues 1136–1170 are disordered; sequence TPAQSPAAGTVQGRVPSRRQQRASRGGQRQGGVVA. Residues 1158 to 1170 are compositionally biased toward low complexity; that stretch reads ASRGGQRQGGVVA.

In terms of assembly, monomer. Interacts with TGFB1. Post-translationally, cleaved into 2 chains possibly by a furin-like protease upon or preceding secretion. In terms of tissue distribution, specifically expressed in cartilage. Localizes in the intermediates layer of articular cartilage but neither in the superficial nor in the deepest regions. Specifically and highly expressed in intervertebral disk tissue. Expression increases with aging in hip articular cartilage. Overexpressed in articular hyaline cartilage from patients with calcium pyrophosphate dihydrate crystal deposition disease (CPPD). Expression in intervertebral disk tissue from individuals with lumbar disk disease increases as disk degeneration progresses.

It is found in the secreted. The protein localises to the extracellular space. Its subcellular location is the extracellular matrix. Its function is as follows. Probably plays a role in cartilage scaffolding. May act by antagonizing TGF-beta1 (TGFB1) and IGF1 functions. Has the ability to suppress IGF1-induced proliferation and sulfated proteoglycan synthesis, and inhibits ligand-induced IGF1R autophosphorylation. May inhibit TGFB1-mediated induction of cartilage matrix genes via its interaction with TGFB1. Overexpression may lead to impair chondrocyte growth and matrix repair and indirectly promote inorganic pyrophosphate (PPi) supersaturation in aging and osteoarthritis cartilage. The polypeptide is Cartilage intermediate layer protein 1 (CILP) (Homo sapiens (Human)).